We begin with the raw amino-acid sequence, 319 residues long: MTQLDQLKQFTTVVADTGDFQAMRAYAPHDATTNPSLILKAVQKAEYRPLLEQAVRDARSDSVEDIIDAVLVAFGCEILSIIPGRVSTEVDARLSFDTEATVAKAKHLIALYEARGVARERVLIKIASTWEGIRAADQLRAEGIRCNMTLLFSLAQAVACAEAGVQLISPFVGRIYDWYKKDAGANWDPIAQGGPNDPGVQSVLRIYNYYKKFDYPTEVMGASFRNISQIVELAGCDLLTISPDLLAQLQQSDAPVERKLSPDNANAANIVRLPADEKSFRWHMNADAMATEKLAEGIRLFAADAIKLEALIEPLRAAA.

Lysine 125 acts as the Schiff-base intermediate with substrate in catalysis.

It belongs to the transaldolase family. Type 1 subfamily. Homodimer.

It is found in the cytoplasm. It catalyses the reaction D-sedoheptulose 7-phosphate + D-glyceraldehyde 3-phosphate = D-erythrose 4-phosphate + beta-D-fructose 6-phosphate. The protein operates within carbohydrate degradation; pentose phosphate pathway; D-glyceraldehyde 3-phosphate and beta-D-fructose 6-phosphate from D-ribose 5-phosphate and D-xylulose 5-phosphate (non-oxidative stage): step 2/3. In terms of biological role, transaldolase is important for the balance of metabolites in the pentose-phosphate pathway. The protein is Transaldolase of Ralstonia pickettii (strain 12J).